The primary structure comprises 144 residues: Large ribosomal subunit protein uL15 (144 aa).

A disordered region spans residues 1-54 (MRLNTLSPAAGSKHAPKRVGRGMGSGLGKTAGRGHKGQKSRSGGGVRPGFEGGQ). Gly residues-rich tracts occupy residues 21–31 (RGMGSGLGKTA) and 42–52 (SGGGVRPGFEG).

The protein belongs to the universal ribosomal protein uL15 family. As to quaternary structure, part of the 50S ribosomal subunit.

Functionally, binds to the 23S rRNA. This Shewanella baltica (strain OS223) protein is Large ribosomal subunit protein uL15.